The following is a 457-amino-acid chain: Glutamate--tRNA ligase 1 (457 aa).

The short motif at 9–19 (PSPTGYIHIGN) is the 'HIGH' region element. The 'KMSKS' region signature appears at 250–254 (GLSKR). Lysine 253 lines the ATP pocket.

The protein belongs to the class-I aminoacyl-tRNA synthetase family. Glutamate--tRNA ligase type 1 subfamily. Monomer.

The protein localises to the cytoplasm. The enzyme catalyses tRNA(Glu) + L-glutamate + ATP = L-glutamyl-tRNA(Glu) + AMP + diphosphate. Catalyzes the attachment of glutamate to tRNA(Glu) in a two-step reaction: glutamate is first activated by ATP to form Glu-AMP and then transferred to the acceptor end of tRNA(Glu). This chain is Glutamate--tRNA ligase 1, found in Brucella abortus (strain S19).